The chain runs to 247 residues: ATP synthase subunit a, chloroplastic (247 aa).

Helical transmembrane passes span 38–58, 95–115, 134–154, 199–219, and 220–240; these read QVLITSWVVIAILLGSATLAV, VPFIGTMFLFIFVSNWSGALL, INTTVALALLTSVAYFYAGLT, LVVVVLVSLVPSVVPIPVMFL, and GLFTSGIQALIFATLAAAYIG.

It belongs to the ATPase A chain family. F-type ATPases have 2 components, CF(1) - the catalytic core - and CF(0) - the membrane proton channel. CF(1) has five subunits: alpha(3), beta(3), gamma(1), delta(1), epsilon(1). CF(0) has four main subunits: a, b, b' and c.

The protein localises to the plastid. Its subcellular location is the chloroplast thylakoid membrane. In terms of biological role, key component of the proton channel; it plays a direct role in the translocation of protons across the membrane. The polypeptide is ATP synthase subunit a, chloroplastic (Jasminum nudiflorum (Winter jasmine)).